The chain runs to 614 residues: Probable ATP-dependent RNA helicase DDX5 (614 aa).

Over residues 1 to 15 (MSGYSSDRDRGRDRG) the composition is skewed to basic and acidic residues. Positions 1-39 (MSGYSSDRDRGRDRGFGAPRFGGSRAGPLSGKKFGNPGE) are disordered. Ser24 carries the post-translational modification Phosphoserine. Lys32 carries the N6-acetyllysine; alternate modification. Residue Lys32 forms a Glycyl lysine isopeptide (Lys-Gly) (interchain with G-Cter in SUMO2); alternate linkage. N6-acetyllysine is present on residues Lys33 and Lys40. Residue Lys45 forms a Glycyl lysine isopeptide (Lys-Gly) (interchain with G-Cter in SUMO2) linkage. Lys53 participates in a covalent cross-link: Glycyl lysine isopeptide (Lys-Gly) (interchain with G-Cter in SUMO2); alternate. A Glycyl lysine isopeptide (Lys-Gly) (interchain with G-Cter in SUMO); alternate cross-link involves residue Lys53. Lys53 is covalently cross-linked (Glycyl lysine isopeptide (Lys-Gly) (interchain with G-Cter in SUMO1); alternate). The Q motif motif lies at 94–122 (LNFYEANFPANVMDVIARQNFTEPTAIQA). Residues 114-116 (FTE), Gln121, and 138-145 (AQTGSGKT) each bind ATP. Residues 125 to 300 (WPVALSGLDM…EDFLKDYIHI (176 aa)) form the Helicase ATP-binding domain. Lys236 is subject to N6-acetyllysine. Positions 248 to 251 (DEAD) match the DEAD box motif. Tyr297 is subject to Phosphotyrosine. The Helicase C-terminal domain maps to 328–475 (KLIRLMEEIM…AINPKLLQLV (148 aa)). Glycyl lysine isopeptide (Lys-Gly) (interchain with G-Cter in SUMO2) cross-links involve residues Lys340, Lys343, Lys388, Lys391, Lys411, Lys437, Lys451, and Lys470. The tract at residues 477–504 (DRGSGRSRGRGGMKDDRRDRYSAGKRGG) is disordered. Residues 477 to 614 (DRGSGRSRGR…GYPMPTGYSQ (138 aa)) form a transactivation domain region. Residue Ser480 is modified to Phosphoserine. The segment covering 488 to 498 (GMKDDRRDRYS) has biased composition (basic and acidic residues). Ser520 is subject to Phosphoserine. Residue Lys523 forms a Glycyl lysine isopeptide (Lys-Gly) (interchain with G-Cter in SUMO2) linkage.

Belongs to the DEAD box helicase family. DDX5/DBP2 subfamily. In terms of assembly, identified in the spliceosome C complex. Component of a ribonucleoprotein complex containing mRNAs and RNA-binding proteins including DDX5, HNRNPH2 and SRSF1 as well as splicing regulator ARVCF. Interacts with RBM4; the interaction occurs in an RNA-independent manner. Interacts with AGO1 and AGO2. Interacts with ESR1, AR, EP300, CREBBP, POLR2A, TP53, RUNX2 and HDAC1. Self-associates. Interacts with DDX17. Interacts with BRDT. The large PER complex involved in the repression of transcriptional termination is composed of at least PER2, CDK9, DDX5, DHX9, NCBP1 and POLR2A (active). Interacts with DHX36; this interaction occurs in a RNA-dependent manner. Interacts with NUPR1. Interacts with ERCC6. Interacts with DDX3X in the cytoplasm; this interaction may be more efficient when both proteins are unphosphorylated. Arg-502 is dimethylated, probably to asymmetric dimethylarginine. In terms of processing, sumoylated; sumoylation, promoted by PIAS1, promotes interaction with HDAC1 and transcriptional repression activity. Sumoylation also significantly increases stability, and reduces polyubiquitination. Post-translationally, polyubiquitinated, leading to proteasomal degradation. Weakly phosphorylated in the G1/S phase of the cell cycle and much more at G2/M, especially at Thr and Tyr residues.

It is found in the nucleus. Its subcellular location is the nucleolus. It localises to the nucleus speckle. The protein resides in the cytoplasm. It carries out the reaction ATP + H2O = ADP + phosphate + H(+). In terms of biological role, involved in the alternative regulation of pre-mRNA splicing; its RNA helicase activity is necessary for increasing tau exon 10 inclusion and occurs in a RBM4-dependent manner. Binds to the tau pre-mRNA in the stem-loop region downstream of exon 10. The rate of ATP hydrolysis is highly stimulated by single-stranded RNA. Involved in transcriptional regulation; the function is independent of the RNA helicase activity. Transcriptional coactivator for androgen receptor AR but probably not ESR1. Synergizes with DDX17 and SRA1 RNA to activate MYOD1 transcriptional activity and involved in skeletal muscle differentiation. Transcriptional coactivator for p53/TP53 and involved in p53/TP53 transcriptional response to DNA damage and p53/TP53-dependent apoptosis. Transcriptional coactivator for RUNX2 and involved in regulation of osteoblast differentiation. Acts as a transcriptional repressor in a promoter-specific manner; the function probably involves association with histone deacetylases, such as HDAC1. As component of a large PER complex is involved in the inhibition of 3' transcriptional termination of circadian target genes such as PER1 and NR1D1 and the control of the circadian rhythms. The sequence is that of Probable ATP-dependent RNA helicase DDX5 (DDX5) from Homo sapiens (Human).